Consider the following 169-residue polypeptide: MAVKIKLQRVGKIRTPQYRVVVQDARARRGGAVIENLGIYQPANQPSIIDINSERAQYWIGVGAQPTDTALALLKLTGDWQKAKGLEGGENTVKPQPEKKSKLDIFNEALAEAAEGPTAEAITEKRRKAKEEAEAKAAAEAEAAEKAEAEAAEKAAAEAAEESEEASAE.

Residues 114–169 (AEGPTAEAITEKRRKAKEEAEAKAAAEAEAAEKAEAEAAEKAAAEAAEESEEASAE) are disordered. Residues 129 to 156 (AKEEAEAKAAAEAEAAEKAEAEAAEKAA) show a composition bias toward basic and acidic residues. Residues 159–169 (AAEESEEASAE) show a composition bias toward acidic residues.

It belongs to the bacterial ribosomal protein bS16 family.

This is Small ribosomal subunit protein bS16 from Corynebacterium urealyticum (strain ATCC 43042 / DSM 7109).